The primary structure comprises 732 residues: Acylamino-acid-releasing enzyme (732 aa).

Position 1 is a blocked amino end (Met); alternate (Met-1). At Met-1 the chain carries N-acetylmethionine; alternate. A phosphoserine mark is found at Ser-185 and Ser-187. Residues Ser-587, Asp-675, and His-707 each act as charge relay system in the active site.

The protein belongs to the peptidase S9C family. As to quaternary structure, homotetramer.

Its subcellular location is the cytoplasm. The enzyme catalyses Cleavage of an N-acetyl or N-formyl amino acid from the N-terminus of a polypeptide.. Its activity is regulated as follows. Homotetramerization is required for activity. Tetramerization results in the formation of a gated channel which is involved in substrate selection and substrate access to the catalytic sites. In terms of biological role, this enzyme catalyzes the hydrolysis of the N-terminal peptide bond of an N-acetylated peptide to generate an N-acetylated amino acid and a peptide with a free N-terminus. It preferentially cleaves off Ac-Ala, Ac-Met and Ac-Ser. Also, involved in the degradation of oxidized and glycated proteins. The polypeptide is Acylamino-acid-releasing enzyme (Apeh) (Rattus norvegicus (Rat)).